The chain runs to 1356 residues: DNA-directed RNA polymerase subunit beta (1356 aa).

This sequence belongs to the RNA polymerase beta chain family. As to quaternary structure, the RNAP catalytic core consists of 2 alpha, 1 beta, 1 beta' and 1 omega subunit. When a sigma factor is associated with the core the holoenzyme is formed, which can initiate transcription.

The catalysed reaction is RNA(n) + a ribonucleoside 5'-triphosphate = RNA(n+1) + diphosphate. In terms of biological role, DNA-dependent RNA polymerase catalyzes the transcription of DNA into RNA using the four ribonucleoside triphosphates as substrates. This chain is DNA-directed RNA polymerase subunit beta, found in Caulobacter vibrioides (strain ATCC 19089 / CIP 103742 / CB 15) (Caulobacter crescentus).